Consider the following 557-residue polypeptide: Hyaluronan synthase 3 (557 aa).

The Cytoplasmic portion of the chain corresponds to Met1–Arg10. A helical transmembrane segment spans residues Val11–Thr31. The Extracellular segment spans residues Gly32–Ser44. A helical membrane pass occupies residues Phe45 to Leu65. Topologically, residues Glu66–Leu367 are cytoplasmic. A helical membrane pass occupies residues Trp368–Val388. Over Gln389–Asn398 the chain is Extracellular. Residues Ile399 to Ile419 traverse the membrane as a helical segment. Topologically, residues Leu420–Ser430 are cytoplasmic. A helical membrane pass occupies residues Leu431–Ile451. The Extracellular segment spans residues Lys452–Lys463. A helical transmembrane segment spans residues Leu464 to Gly484. Residues Leu485–Glu501 lie on the Cytoplasmic side of the membrane. The helical transmembrane segment at Leu502–Leu522 threads the bilayer. Over Tyr523–Pro557 the chain is Extracellular.

This sequence belongs to the NodC/HAS family. Requires Mg(2+) as cofactor. Post-translationally, O-GlcNAcylation increases the hyaluronan synthase activity, HAS3 stability and its plasma membrane residence. The concentration of UDP-GlcNAc controls the level of O-GlcNAc modification.

Its subcellular location is the cell membrane. The protein resides in the golgi apparatus membrane. The protein localises to the golgi apparatus. It is found in the trans-Golgi network membrane. It localises to the cytoplasmic vesicle. The enzyme catalyses [hyaluronan](n) + UDP-N-acetyl-alpha-D-glucosamine = N-acetyl-beta-D-glucosaminyl-(1-&gt;4)-[hyaluronan](n) + UDP + H(+). The catalysed reaction is N-acetyl-beta-D-glucosaminyl-(1-&gt;4)-[hyaluronan](n) + UDP-alpha-D-glucuronate = [hyaluronan](n+1) + UDP + H(+). It functions in the pathway glycan biosynthesis; hyaluronan biosynthesis. Its function is as follows. Catalyzes the addition of GlcNAc or GlcUA monosaccharides to the nascent hyaluronan polymer. Therefore, it is essential to hyaluronan synthesis a major component of most extracellular matrices that has a structural role in tissues architectures and regulates cell adhesion, migration and differentiation. This is one of three isoenzymes responsible for cellular hyaluronan synthesis. This is Hyaluronan synthase 3 (has3) from Xenopus laevis (African clawed frog).